The sequence spans 379 residues: MNNRKPLQLSLLVASLAVAFTASATNADAHPPLAPLPPVPVPKDNPQSAEKIALGKQLFWDYRLSGDGSMPCVSCHLPALGWGDGGQISRGYPGTKHWRNSQTILNSAYYNKLFWEGSVNSLEEQAPSAAEGAVAGNGDPSVMEMRLRFVPEYVDAFKNVFGSQWPRMNDAYRAIASYQRTVVSDASKVPFDRYANGDKNALDTSQKRGMALFNGKAGCVQCHNGPLASDQKYYDLGLPDFAGFVDDPLYQVTHRWEHYQKGVSEPRYRAANMDYGLYYVTKNPKDVGKFRTPSLREAKYTAPYMHNGVFTSLQEVVDFYDRGGGSGTSKSELLKPLKLAAQEKQDLIAFIEALSMSEPLLHDDPTLPGEYQPLPAPIK.

The signal sequence occupies residues 1–24 (MNNRKPLQLSLLVASLAVAFTASA). Cytochrome c domains follow at residues 50–158 (EKIA…DAFK) and 204–355 (TSQK…EALS). Heme c-binding residues include Cys72, Cys75, His76, Cys219, Cys222, and His223.

The iodate reductase (Idr) complex is composed of a molybdopterin-dependent iodate reductase (IdrA and IdrB subunits) and two associated peroxidases (IdrP1 and IdrP2). Heme c is required as a cofactor.

It localises to the periplasm. It carries out the reaction 2 Fe(II)-[cytochrome c] + H2O2 + 2 H(+) = 2 Fe(III)-[cytochrome c] + 2 H2O. Its function is as follows. Involved in iodate respiration. Probably reduces the H(2)O(2) produced by IdrA/IdrB to H(2)O, using a reduced cytochrome c as the electron donor. The sequence is that of Cytochrome-c peroxidase IdrP1 from Pseudomonas sp. (strain SCT).